A 159-amino-acid polypeptide reads, in one-letter code: Probable GPI-anchored protein ANS1 (159 aa).

The signal sequence occupies residues 1–20; that stretch reads MKCTLVSTLFAITNILVAHA. The stretch at 101–114 is one PIR1/2/3 repeat; that stretch reads AAISQISDGQIQAT. A lipid anchor (GPI-anchor amidated glycine) is attached at Gly137. The propeptide at 138-159 is removed in mature form; that stretch reads AGMKVESKNMGYIVGVAALLFL.

Its subcellular location is the cell membrane. In Saccharomyces cerevisiae (strain ATCC 204508 / S288c) (Baker's yeast), this protein is Probable GPI-anchored protein ANS1 (ANS1).